Reading from the N-terminus, the 472-residue chain is MGENIGKITQVMGPVVDVEFEQGNLPNILTALLITNPTINDEADNLVVEVAQHLGDNVVRTIAMDVTDGLVRGMPVKDTGDPIMMPVGEAVLGRVLNVVGRPVDGLGPVSQEKMLPIHRLAPKFTEQDTTVRVLETGVKVIDLLVPFPRGGKMGMFGGAGVGKTVIMMEMVHNIAMQHGGISVFAGVGERTREGNDLYHEMKEGGVLPKASLVYGQMTEPPGARARVALSALTSAEYFRDQEGQDVLIFIDNIFRFTQAGSEVSALLGRMPSAVGYQPTLAVDLGELQERITSTDKGSITAVQCVYVPADDLTDPAPATTFAHLDGTVVLSRQIVELGIYPAVDPLDSSSRILDPGYLGDEHYGVARTVQQMLQKYKELQDIIAILGMDELSDEDKITVARARKIQRFLSQPFFVAENFTGKPGKYVKLEDTVRGFKEIVDGKHDDLPERAFYMVGGIEEAIENAKAMAEAA.

Gly157 to Thr164 contacts ATP.

It belongs to the ATPase alpha/beta chains family. F-type ATPases have 2 components, CF(1) - the catalytic core - and CF(0) - the membrane proton channel. CF(1) has five subunits: alpha(3), beta(3), gamma(1), delta(1), epsilon(1). CF(0) has three main subunits: a(1), b(2) and c(9-12). The alpha and beta chains form an alternating ring which encloses part of the gamma chain. CF(1) is attached to CF(0) by a central stalk formed by the gamma and epsilon chains, while a peripheral stalk is formed by the delta and b chains.

The protein localises to the cell inner membrane. The enzyme catalyses ATP + H2O + 4 H(+)(in) = ADP + phosphate + 5 H(+)(out). Its function is as follows. Produces ATP from ADP in the presence of a proton gradient across the membrane. The catalytic sites are hosted primarily by the beta subunits. The sequence is that of ATP synthase subunit beta from Desulfatibacillum aliphaticivorans.